The sequence spans 321 residues: Large ribosomal RNA subunit accumulation protein YCED homolog 1, chloroplastic (321 aa).

The N-terminal 32 residues, 1-32 (MSLVCSLSCVAPLPQTKQSRPSFLKLETCTLS), are a transit peptide targeting the chloroplast.

This sequence belongs to the DUF177 domain family.

It is found in the plastid. The protein localises to the chloroplast stroma. It localises to the chloroplast nucleoid. In terms of biological role, plays a role in synthesis, processing and/or stability of 23S rRNA. Required for embryogenesis. The chain is Large ribosomal RNA subunit accumulation protein YCED homolog 1, chloroplastic from Arabidopsis thaliana (Mouse-ear cress).